Consider the following 463-residue polypeptide: tRNA-2-methylthio-N(6)-dimethylallyladenosine synthase (463 aa).

Positions 19–135 constitute an MTTase N-terminal domain; sequence RSYWITTFGC…LENLLGKVDL (117 aa). [4Fe-4S] cluster-binding residues include Cys-28, Cys-64, Cys-98, Cys-170, Cys-174, and Cys-177. Positions 156-393 constitute a Radical SAM core domain; that stretch reads RESSICGWVN…NALVEKTARN (238 aa). One can recognise a TRAM domain in the interval 396-463; sequence QRYINNIESV…RPFSLTGELC (68 aa).

The protein belongs to the methylthiotransferase family. MiaB subfamily. As to quaternary structure, monomer. The cofactor is [4Fe-4S] cluster.

It localises to the cytoplasm. The enzyme catalyses N(6)-dimethylallyladenosine(37) in tRNA + (sulfur carrier)-SH + AH2 + 2 S-adenosyl-L-methionine = 2-methylsulfanyl-N(6)-dimethylallyladenosine(37) in tRNA + (sulfur carrier)-H + 5'-deoxyadenosine + L-methionine + A + S-adenosyl-L-homocysteine + 2 H(+). Its function is as follows. Catalyzes the methylthiolation of N6-(dimethylallyl)adenosine (i(6)A), leading to the formation of 2-methylthio-N6-(dimethylallyl)adenosine (ms(2)i(6)A) at position 37 in tRNAs that read codons beginning with uridine. This Prochlorococcus marinus (strain MIT 9312) protein is tRNA-2-methylthio-N(6)-dimethylallyladenosine synthase.